Reading from the N-terminus, the 1091-residue chain is Error-prone DNA polymerase (1091 aa).

Residues 1–51 (MGWSNGPPSWAEMERVLNGKPRHAGVPAFDADGDVPRSRKRGAYQPPGRER) are disordered.

Belongs to the DNA polymerase type-C family. DnaE2 subfamily.

The protein resides in the cytoplasm. The enzyme catalyses DNA(n) + a 2'-deoxyribonucleoside 5'-triphosphate = DNA(n+1) + diphosphate. Functionally, DNA polymerase involved in damage-induced mutagenesis and translesion synthesis (TLS). It is not the major replicative DNA polymerase. In Mycobacterium bovis (strain ATCC BAA-935 / AF2122/97), this protein is Error-prone DNA polymerase.